Here is a 968-residue protein sequence, read N- to C-terminus: Leucine--tRNA ligase (968 aa).

Residues 1-13 (MTETPTGTQSSRE) show a composition bias toward polar residues. Residues 1 to 22 (MTETPTGTQSSRETAADDTPRH) are disordered. The short motif at 75 to 86 (PYPSGEGLHVGH) is the 'HIGH' region element. The 'KMSKS' region motif lies at 741 to 745 (KIGKS). K744 is an ATP binding site.

It belongs to the class-I aminoacyl-tRNA synthetase family.

The protein localises to the cytoplasm. It catalyses the reaction tRNA(Leu) + L-leucine + ATP = L-leucyl-tRNA(Leu) + AMP + diphosphate. The protein is Leucine--tRNA ligase of Mycolicibacterium vanbaalenii (strain DSM 7251 / JCM 13017 / BCRC 16820 / KCTC 9966 / NRRL B-24157 / PYR-1) (Mycobacterium vanbaalenii).